A 1206-amino-acid polypeptide reads, in one-letter code: MGDGTEFVVRSDREDKKLAEDRISDEQVVKNELVRSDEVRDDNEDEVFEEAIGSENDEQEEEEDPKRELFESDDLPLVETLKSSMVEHEVEDFEEAVGDLDETSSNEGGVKDFTAVGESHGAGEAEFDVLATKMNGDKGEGGGGGSYDKVESSLDVVDTTENATSTNTNGSNLAAEHVGIENGKTHSFLGNGIASPKNKEVVAEVIPKDDGIEEPWNDGIEVDNWEERVDGIQTEQEVEEGEGTTENQFEKRTEEEVVEGEGTSKNLFEKQTEQDVVEGEGTSKDLFENGSVCMDSESEAERNGETGAAYTSNIVTNASGDNEVSSAVTSSPLEESSSGEKGETEGDSTCLKPEQHLASSPHSYPESTEVHSNSGSPGVTSREHKPVQSANGGHDVQSPQPNKELEKQQSSRVHVDPEITENSHVETEPEVVSSVSPTESRSNPAALPPARPAGLGRASPLLEPASRAPQQSRVNGNGSHNQFQQAEDSTTTEADEHDETREKLQLIRVKFLRLAHRLGQTPHNVVVAQVLYRLGLAEQLRGRNGSRVGAFSFDRASAMAEQLEAAGQDPLDFSCTIMVLGKSGVGKSATINSIFDEVKFCTDAFQMGTKRVQDVEGLVQGIKVRVIDTPGLLPSWSDQAKNEKILNSVKAFIKKNPPDIVLYLDRLDMQSRDSGDMPLLRTISDVFGPSIWFNAIVGLTHAASVPPDGPNGTASSYDMFVTQRSHVIQQAIRQAAGDMRLMNPVSLVENHSACRTNRAGQRVLPNGQVWKPHLLLLSFASKILAEANALLKLQDNIPGRPFAARSKAPPLPFLLSSLLQSRPQPKLPEQQYGDEEDEDDLEESSDSDEESEYDQLPPFKSLTKAQMATLSKSQKKQYLDEMEYREKLLMKKQMKEERKRRKMFKKFAAEIKDLPDGYSENVEEESGGPASVPVPMPDLSLPASFDSDNPTHRYRYLDSSNQWLVRPVLETHGWDHDIGYEGVNAERLFVVKEKIPISVSGQVTKDKKDANVQLEMASSVKHGEGKSTSLGFDMQTVGKELAYTLRSETRFNNFRRNKAAAGLSVTHLGDSVSAGLKVEDKFIASKWFRIVMSGGAMTSRGDFAYGGTLEAQLRDKDYPLGRFLTTLGLSVMDWHGDLAIGGNIQSQVPIGRSSNLIARANLNNRGAGQVSVRVNSSEQLQLAMVAIVPLFKKLLSYYYPQTQYGQ.

Gly-2 is modified (N-acetylglycine). A coiled-coil region spans residues 13–33 (REDKKLAEDRISDEQVVKNEL). 2 disordered regions span residues 33 to 75 (LVRS…SDDL) and 97 to 119 (VGDL…VGES). The segment covering 39–49 (VRDDNEDEVFE) has biased composition (acidic residues). Ser-195 is modified (phosphoserine). Positions 233 to 499 (QTEQEVEEGE…TTTEADEHDE (267 aa)) are disordered. Residues 309-324 (AYTSNIVTNASGDNEV) are compositionally biased toward polar residues. A compositionally biased stretch (low complexity) spans 325-336 (SSAVTSSPLEES). A phosphoserine mark is found at Ser-337, Ser-363, and Ser-398. A compositionally biased stretch (polar residues) spans 357–379 (LASSPHSYPESTEVHSNSGSPGV). Residues 403–427 (KELEKQQSSRVHVDPEITENSHVET) are compositionally biased toward basic and acidic residues. Low complexity predominate over residues 430–440 (EVVSSVSPTES). Positions 468-492 (APQQSRVNGNGSHNQFQQAEDSTTT) are enriched in polar residues. The 230-residue stretch at 572 to 801 (DFSCTIMVLG…KLQDNIPGRP (230 aa)) folds into the AIG1-type G domain. Residues 581 to 588 (GKSGVGKS) form a G1 region. GTP is bound by residues 584 to 589 (GVGKSA) and 603 to 608 (DAFQMG). Residue Ser-588 participates in Mg(2+) binding. Positions 603–606 (DAFQ) are homodimerization. The interval 607–611 (MGTKR) is G2. Residues 628–631 (DTPG) form a G3 region. The tract at residues 666–671 (RLDMQS) is homodimerization. Residues 700 to 703 (THAA) form a G4 region. GTP contacts are provided by residues His-701 and 749 to 750 (EN). Positions 749–751 (ENH) are G5. The segment at 824-862 (QPKLPEQQYGDEEDEDDLEESSDSDEESEYDQLPPFKSL) is disordered. Positions 832-853 (YGDEEDEDDLEESSDSDEESEY) are enriched in acidic residues. The helical transmembrane segment at 1182–1199 (LAMVAIVPLFKKLLSYYY) threads the bilayer.

Belongs to the TRAFAC class TrmE-Era-EngA-EngB-Septin-like GTPase superfamily. AIG1/Toc34/Toc159-like paraseptin GTPase family. TOC159 subfamily. As to quaternary structure, homodimer. Part of the TOC core complex that includes 1 protein for the specific recognition of transit peptides surrounded by a ring composed of four proteins forming translocation channels, and four to five GTP-binding proteins providing energy. This core complex can interact with components of the TIC complex to form a larger import complex. Chloroplastic protein precursor such as prSS (precursor of the RuBisCO small subunit) interacts with these complexes. The TOC complex contains a specific subset of polar lipids such as digalactosyldiacylglyceride (DGDG), phosphatidylcholine (PC) and phosphatidylglycerol (PG). It depends on Mg(2+) as a cofactor. Post-translationally, phosphorylated by KOC1. In terms of tissue distribution, expressed in seedlings, leaves, flowers, and roots.

The protein resides in the plastid. Its subcellular location is the chloroplast outer membrane. It localises to the cytoplasm. In terms of biological role, GTPase involved in protein precursor import into chloroplasts. Seems to recognize chloroplast-destined precursor proteins and regulate their presentation to the translocation channel through GTP hydrolysis. Probably specialized in the import of nuclear encoded non-photosynthetic preproteins from the cytoplasm to the chloroplast. This is Translocase of chloroplast 132, chloroplastic from Arabidopsis thaliana (Mouse-ear cress).